The sequence spans 284 residues: Acetyl-coenzyme A carboxylase carboxyl transferase subunit beta (284 aa).

The CoA carboxyltransferase N-terminal domain occupies Leu25–Ala284. Zn(2+)-binding residues include Cys29, Cys32, Cys48, and Cys51. The segment at Cys29–Cys51 adopts a C4-type zinc-finger fold.

The protein belongs to the AccD/PCCB family. Acetyl-CoA carboxylase is a heterohexamer composed of biotin carboxyl carrier protein (AccB), biotin carboxylase (AccC) and two subunits each of ACCase subunit alpha (AccA) and ACCase subunit beta (AccD). Zn(2+) serves as cofactor.

Its subcellular location is the cytoplasm. The enzyme catalyses N(6)-carboxybiotinyl-L-lysyl-[protein] + acetyl-CoA = N(6)-biotinyl-L-lysyl-[protein] + malonyl-CoA. It participates in lipid metabolism; malonyl-CoA biosynthesis; malonyl-CoA from acetyl-CoA: step 1/1. Component of the acetyl coenzyme A carboxylase (ACC) complex. Biotin carboxylase (BC) catalyzes the carboxylation of biotin on its carrier protein (BCCP) and then the CO(2) group is transferred by the transcarboxylase to acetyl-CoA to form malonyl-CoA. The protein is Acetyl-coenzyme A carboxylase carboxyl transferase subunit beta of Hydrogenovibrio crunogenus (strain DSM 25203 / XCL-2) (Thiomicrospira crunogena).